We begin with the raw amino-acid sequence, 512 residues long: Cytokinin hydroxylase (512 aa).

The helical transmembrane segment at 2-22 (MVTLVLKYVLVIVMTLILRVL) threads the bilayer. Position 458 (cysteine 458) interacts with heme.

It belongs to the cytochrome P450 family. The cofactor is heme. As to expression, specifically expressed in roots.

It localises to the membrane. The catalysed reaction is N(6)-(dimethylallyl)adenosine 5'-phosphate + NADPH + O2 + H(+) = 9-ribosyl-trans-zeatin 5'-phosphate + NADP(+) + H2O. The enzyme catalyses N(6)-(dimethylallyl)adenosine 5'-diphosphate + NADPH + O2 + H(+) = 9-ribosyl-trans-zeatin 5'-diphosphate + NADP(+) + H2O. It carries out the reaction N(6)-(dimethylallyl)adenosine 5'-triphosphate + NADPH + O2 + H(+) = 9-ribosyl-trans-zeatin 5'-triphosphate + NADP(+) + H2O. Cytokinin hydroxylase that catalyzes the biosynthesis of trans-zeatin via the isopentenyladenine riboside 5'-monophosphate (iPRMP)-dependent pathway. Can use isopentenyladenosine-5'-monophosphate, isopentenyladenosine-5'-diphosphate and isopentenyladenosine-5'-triphosphate as substrate. The sequence is that of Cytokinin hydroxylase (CYP735A2) from Arabidopsis thaliana (Mouse-ear cress).